The following is a 291-amino-acid chain: Kynurenine formamidase (291 aa).

Positions 33–37 match the HGGXW motif; sequence HGGAW. Residue S107 is the Nucleophile of the active site. Catalysis depends on residues D242 and H280.

The protein belongs to the kynurenine formamidase family. In terms of assembly, homodimer.

The enzyme catalyses N-formyl-L-kynurenine + H2O = L-kynurenine + formate + H(+). It participates in amino-acid degradation; L-tryptophan degradation via kynurenine pathway; L-kynurenine from L-tryptophan: step 2/2. In terms of biological role, catalyzes the hydrolysis of N-formyl-L-kynurenine to L-kynurenine, the second step in the kynurenine pathway of tryptophan degradation. Kynurenine may be further oxidized to nicotinic acid, NAD(H) and NADP(H). Required for elimination of toxic metabolites. This Debaryomyces hansenii (strain ATCC 36239 / CBS 767 / BCRC 21394 / JCM 1990 / NBRC 0083 / IGC 2968) (Yeast) protein is Kynurenine formamidase.